Here is a 330-residue protein sequence, read N- to C-terminus: Erlin-2-B (330 aa).

Residues 1-2 are Cytoplasmic-facing; sequence MS. Residues 3–23 traverse the membrane as a helical segment; the sequence is HAGAIAALGVALIAAALFSAI. Over 24-330 the chain is Lumenal; that stretch reads HKIEEGHVGV…NEPAAAEELK (307 aa). The N-linked (GlcNAc...) asparagine glycan is linked to Asn-106. Residues 308-330 are disordered; sequence SSSAGPRVQSAKRNEPAAAEELK. Residues 319 to 330 are compositionally biased toward basic and acidic residues; it reads KRNEPAAAEELK.

This sequence belongs to the band 7/mec-2 family.

It is found in the endoplasmic reticulum membrane. Its function is as follows. Mediates the endoplasmic reticulum-associated degradation (ERAD) of inositol 1,4,5-trisphosphate receptors (IP3Rs). Promotes sterol-accelerated ERAD of HMGCR. Involved in regulation of cellular cholesterol homeostasis by regulation the SREBP signaling pathway. This is Erlin-2-B (erlin2-b) from Xenopus laevis (African clawed frog).